The following is a 345-amino-acid chain: Mitochondrial substrate carrier family protein J (345 aa).

Over 1–31 (MSSSHTIQETKEVHTKTNKRIQWDDLDPKRY) the chain is Mitochondrial intermembrane. Solcar repeat units lie at residues 30–118 (RYYF…VKQG), 129–217 (DLLF…SKSK), and 255–342 (EDPI…VKKL). The chain crosses the membrane as a helical span at residues 32 to 52 (YFYNFLLGGSIDLLMFPLDVI). At 53 to 88 (RTRLQVQGSQNVIQSFPQYNGTFDGFKKLIRLEGKR) the chain is on the mitochondrial matrix side. Residues 89–110 (ALYKGFLTSECGYLCSRAIYFG) form a helical membrane-spanning segment. The Mitochondrial intermembrane portion of the chain corresponds to 111–129 (SYEFVKQGFLKGRSDSDSD). A helical transmembrane segment spans residues 130–150 (LLFVTTISGAISEALASVIWV). Residues 151–191 (PFDVATQSVQIQGSLSKPKYKGGSDVFKKIYGERGIKGLYK) lie on the Mitochondrial matrix side of the membrane. Residues 192-208 (GFGATIIRNVPYSGIWW) form a helical membrane-spanning segment. Topologically, residues 209–257 (GTYEISKSKLTQFNIRQKLGLKERSSHSLAVSAEIDKNNPSHEVENEDP) are mitochondrial intermembrane. Residues 258 to 278 (IIHFISGFFAAVFATSITNPL) form a helical membrane-spanning segment. Residues 279–316 (DVAKTRLQTGVFPENEKPNFYTIIKSTIRKEGIRALWK) lie on the Mitochondrial matrix side of the membrane. Residues 317 to 337 (GLVPSLLTSTPYSMISIFLYE) form a helical membrane-spanning segment. The Mitochondrial intermembrane portion of the chain corresponds to 338-345 (EVKKLSLK).

This sequence belongs to the mitochondrial carrier (TC 2.A.29) family.

The protein resides in the mitochondrion inner membrane. In terms of biological role, mitochondrial solute carriers shuttle metabolites, nucleotides, and cofactors through the mitochondrial inner membrane. In Dictyostelium discoideum (Social amoeba), this protein is Mitochondrial substrate carrier family protein J (mcfJ).